A 396-amino-acid chain; its full sequence is S-adenosylmethionine synthase (396 aa).

ATP is bound at residue histidine 15. A Mg(2+)-binding site is contributed by aspartate 17. K(+) is bound at residue glutamate 43. L-methionine contacts are provided by glutamate 56 and glutamine 99. Positions 99–109 are flexible loop; sequence QSSDIAQGVDR. ATP-binding positions include 175-177, 241-242, aspartate 250, 256-257, serine 273, and lysine 277; these read DGK, RF, and RK. Aspartate 250 lines the L-methionine pocket. Residue lysine 281 participates in L-methionine binding.

The protein belongs to the AdoMet synthase family. Homotetramer; dimer of dimers. The cofactor is Mg(2+). It depends on K(+) as a cofactor.

Its subcellular location is the cytoplasm. The catalysed reaction is L-methionine + ATP + H2O = S-adenosyl-L-methionine + phosphate + diphosphate. It functions in the pathway amino-acid biosynthesis; S-adenosyl-L-methionine biosynthesis; S-adenosyl-L-methionine from L-methionine: step 1/1. Catalyzes the formation of S-adenosylmethionine (AdoMet) from methionine and ATP. The overall synthetic reaction is composed of two sequential steps, AdoMet formation and the subsequent tripolyphosphate hydrolysis which occurs prior to release of AdoMet from the enzyme. In Pelotomaculum thermopropionicum (strain DSM 13744 / JCM 10971 / SI), this protein is S-adenosylmethionine synthase.